The following is a 278-amino-acid chain: Large ribosomal subunit protein uL2c (278 aa).

The disordered stretch occupies residues 224 to 256; sequence NPVDHPHGGGEGRAPIGRKKPTTPWGYPALGRK.

The protein belongs to the universal ribosomal protein uL2 family. Part of the 50S ribosomal subunit.

The protein localises to the plastid. The polypeptide is Large ribosomal subunit protein uL2c (rpl2) (Cuscuta exaltata (Tall dodder)).